A 281-amino-acid chain; its full sequence is Proteasome subunit beta 2 (281 aa).

The propeptide at 1–53 (MEANTRSTGRLPAAFLTPGSSSFMDFLSEHQPEILPGNRQLPPTQGVIEAPHG) is removed in mature form; by autocatalysis. The active-site Nucleophile is the Thr54.

It belongs to the peptidase T1B family. As to quaternary structure, the 20S proteasome core is composed of 14 alpha and 14 beta subunits that assemble into four stacked heptameric rings, resulting in a barrel-shaped structure. The two inner rings, each composed of seven catalytic beta subunits, are sandwiched by two outer rings, each composed of seven alpha subunits. The catalytic chamber with the active sites is on the inside of the barrel. Has a gated structure, the ends of the cylinder being occluded by the N-termini of the alpha-subunits. Is capped by the proteasome-associated ATPase, ARC.

It localises to the cytoplasm. The catalysed reaction is Cleavage of peptide bonds with very broad specificity.. Its pathway is protein degradation; proteasomal Pup-dependent pathway. With respect to regulation, the formation of the proteasomal ATPase ARC-20S proteasome complex, likely via the docking of the C-termini of ARC into the intersubunit pockets in the alpha-rings, may trigger opening of the gate for substrate entry. Interconversion between the open-gate and close-gate conformations leads to a dynamic regulation of the 20S proteasome proteolysis activity. Functionally, component of the proteasome core, a large protease complex with broad specificity involved in protein degradation. The chain is Proteasome subunit beta 2 from Streptomyces avermitilis (strain ATCC 31267 / DSM 46492 / JCM 5070 / NBRC 14893 / NCIMB 12804 / NRRL 8165 / MA-4680).